Reading from the N-terminus, the 115-residue chain is Basic leucine zipper transcriptional factor ATF-like (115 aa).

Residues 1 to 57 are disordered; sequence MQQEPDRNEQGYCSSPPSSNKQDSSDDTKKIQRREKNRIAAQKSRQRQTQKADSLHI. Residues 27-90 form the bZIP domain; sequence DTKKIQRREK…KYLTCVLSTH (64 aa). Positions 29 to 51 are basic motif; it reads KKIQRREKNRIAAQKSRQRQTQK. A leucine-zipper region spans residues 55–83; the sequence is LHIESENLERLNSALRGEISGLREELKYL.

This sequence belongs to the bZIP family.

The protein localises to the nucleus. It is found in the cytoplasm. Functionally, AP-1 family transcription factor that controls the differentiation of lineage-specific cells in the immune system: specifically mediates the differentiation of T-helper 17 cells (Th17), follicular T-helper cells (TfH), CD8(+) dendritic cells and class-switch recombination (CSR) in B-cells. This is Basic leucine zipper transcriptional factor ATF-like (batf) from Xenopus tropicalis (Western clawed frog).